The primary structure comprises 461 residues: MPREIITIQAGQCGNSIGSQFWQQLCLEHGISQDGTIEDFATEGGDRKDVFFYQSDDTRYIPRSILIDLEPRVINTIQTGPYRNIYNPENFYVGKSGLGAGNNWGDGYQTGEQVHEEIMEMIEREADGSDSLEGFMMLHSIAGGTGSGLGSFLLERLNDRFPKKIIQTYSVFPDTTSAGDVVVHPYNSLLAMRRLTQNADSVVVLDNGALSHIAADRLHVQEPSFQQTNQLVSTVMSASTTTLRYPGYMHNDLVSILASLIPTPRCHFLMTSYTPFTGDQVEQAKTVRKTTVLDVMRRLLQPKNRMVSTVPGKKSCYISILNVIQGDVDPTDVHKSLLRIRERRLATFIPWGPASIQVALTKRSPYVTMAHRVSGLMLANHTSIATLFKRIVRQYDGMRKRNAFMEAYKKTAPFSENLNEFDEAREVVMDLIADYEAAEDANYLNPELGENASADTDKRMA.

142–148 is a GTP binding site; sequence AGGTGSG.

Belongs to the tubulin family.

It is found in the cytoplasm. The protein localises to the cytoskeleton. The protein resides in the microtubule organizing center. Its subcellular location is the spindle pole body. Tubulin is the major constituent of microtubules. The gamma chain is found at microtubule organizing centers (MTOC) such as the spindle poles or the centrosome, suggesting that it is involved in the minus-end nucleation of microtubule assembly. This is Tubulin gamma chain (tbg) from Neurospora crassa (strain ATCC 24698 / 74-OR23-1A / CBS 708.71 / DSM 1257 / FGSC 987).